A 103-amino-acid chain; its full sequence is Small ribosomal subunit protein bS18c (103 aa).

It belongs to the bacterial ribosomal protein bS18 family. As to quaternary structure, part of the 30S ribosomal subunit.

Its subcellular location is the plastid. It is found in the chloroplast. The chain is Small ribosomal subunit protein bS18c from Buxus microphylla (Littleleaf boxwood).